Reading from the N-terminus, the 507-residue chain is Probable Xaa-Pro aminopeptidase TRV_02643 (507 aa).

Asp-275, Asp-286, Glu-434, and Glu-478 together coordinate Mn(2+).

It belongs to the peptidase M24B family. It depends on Mn(2+) as a cofactor.

The enzyme catalyses Release of any N-terminal amino acid, including proline, that is linked to proline, even from a dipeptide or tripeptide.. Its function is as follows. Catalyzes the removal of a penultimate prolyl residue from the N-termini of peptides. This chain is Probable Xaa-Pro aminopeptidase TRV_02643, found in Trichophyton verrucosum (strain HKI 0517).